We begin with the raw amino-acid sequence, 182 residues long: ATP-dependent protease subunit HslV (182 aa).

Residue threonine 10 is part of the active site. Positions 166, 169, and 172 each coordinate Na(+).

The protein belongs to the peptidase T1B family. HslV subfamily. In terms of assembly, a double ring-shaped homohexamer of HslV is capped on each side by a ring-shaped HslU homohexamer. The assembly of the HslU/HslV complex is dependent on binding of ATP.

It is found in the cytoplasm. The catalysed reaction is ATP-dependent cleavage of peptide bonds with broad specificity.. Allosterically activated by HslU binding. Functionally, protease subunit of a proteasome-like degradation complex believed to be a general protein degrading machinery. This Rickettsia typhi (strain ATCC VR-144 / Wilmington) protein is ATP-dependent protease subunit HslV.